The chain runs to 427 residues: UDP-N-acetylglucosamine 1-carboxyvinyltransferase (427 aa).

Position 22–23 (22–23 (KN)) interacts with phosphoenolpyruvate. Arginine 99 provides a ligand contact to UDP-N-acetyl-alpha-D-glucosamine. Catalysis depends on cysteine 123, which acts as the Proton donor. Cysteine 123 bears the 2-(S-cysteinyl)pyruvic acid O-phosphothioketal mark. Residues 128–132 (RPIDL), aspartate 313, and isoleucine 335 each bind UDP-N-acetyl-alpha-D-glucosamine.

This sequence belongs to the EPSP synthase family. MurA subfamily.

The protein localises to the cytoplasm. It carries out the reaction phosphoenolpyruvate + UDP-N-acetyl-alpha-D-glucosamine = UDP-N-acetyl-3-O-(1-carboxyvinyl)-alpha-D-glucosamine + phosphate. It participates in cell wall biogenesis; peptidoglycan biosynthesis. Its function is as follows. Cell wall formation. Adds enolpyruvyl to UDP-N-acetylglucosamine. This Sphingopyxis alaskensis (strain DSM 13593 / LMG 18877 / RB2256) (Sphingomonas alaskensis) protein is UDP-N-acetylglucosamine 1-carboxyvinyltransferase.